A 535-amino-acid polypeptide reads, in one-letter code: T-box transcription factor TBX21 (535 aa).

The tract at residues 1-62 (MGIVEPGCGD…SLGSPYPGGA (62 aa)) is disordered. Ser-53 is subject to Phosphoserine. Tyr-77 carries the post-translational modification Phosphotyrosine. The segment at 83–109 (AAGFPGAGESFPPPADAEGYQPGEGYA) is disordered. Residue Tyr-118 is modified to Phosphotyrosine. The T-box DNA-binding region spans 141–326 (LNNHLLWSKF…NNPFAKGFRE (186 aa)). A Phosphotyrosine; by ABL1 modification is found at Tyr-220. Residue Ser-225 is modified to Phosphoserine. At Tyr-266 the chain carries Phosphotyrosine; by ABL1. Thr-303 is modified (phosphothreonine). At Tyr-305 the chain carries Phosphotyrosine; by ABL1. Residue Lys-314 forms a Glycyl lysine isopeptide (Lys-Gly) (interchain with G-Cter in ubiquitin) linkage. The disordered stretch occupies residues 449 to 535 (RPMRTLPMEP…EGQFYNYFPN (87 aa)). Positions 503–520 (SPYPSSGDSSSPAGAPSP) are enriched in low complexity. The residue at position 513 (Ser-513) is a Phosphoserine. At Tyr-530 the chain carries Phosphotyrosine; by ITK.

As to quaternary structure, interacts with RUNX1, RUNX3, ITK, ABL1, RELA, CDK9 and KDM6B. The phosphorylated form (at Thr-303) interacts with NFATC2. Interacts with SMARCA4 in a KDM6B-dependent manner. Interacts with CCTN1. Interacts with USP10. The phosphorylated form (at Tyr-530) interacts with GATA3. Phosphorylations at Ser-53, Tyr-77, Ser-225 and Ser-513 are regulated by mTORC1. Phosphorylation at Tyr-530 is essential for its interaction GATA3. Phosphorylation at Tyr-220, Tyr-266 and Tyr-305 enhances its transcriptional activator activity. Phosphorylation at Thr-303 is required for its interaction with NFATC2. Post-translationally, ubiquitinated at Lys-314, leading to its degradation by the proteasome. Ubiquitination is essential for controlling protein stability, binding to the T-box-binding element of the IFN-gamma promoter, and for interaction with NFATC2 through induction of phosphorylation at Thr-303. Deubiquitinated by USP10 leading to its stabilization. In terms of tissue distribution, T-cell specific.

It localises to the nucleus. Its function is as follows. Lineage-defining transcription factor which initiates Th1 lineage development from naive Th precursor cells both by activating Th1 genetic programs and by repressing the opposing Th2 and Th17 genetic programs. Activates transcription of a set of genes important for Th1 cell function, including those encoding IFN-gamma and the chemokine receptor CXCR3. Induces permissive chromatin accessibilty and CpG methylation in IFNG. Activates IFNG and CXCR3 genes in part by recruiting chromatin remodeling complexes including KDM6B, a SMARCA4-containing SWI/SNF-complex, and an H3K4me2-methyltransferase complex to their promoters and all of these complexes serve to establish a more permissive chromatin state conducive with transcriptional activation. Can activate Th1 genes also via recruitment of Mediator complex and P-TEFb (composed of CDK9 and CCNT1/cyclin-T1) in the form of the super elongation complex (SEC) to super-enhancers and associated genes in activated Th1 cells. Inhibits the Th17 cell lineage commitment by blocking RUNX1-mediated transactivation of Th17 cell-specific transcriptinal regulator RORC. Inhibits the Th2 cell lineage commitment by suppressing the production of Th2 cytokines, such as IL-4, IL-5, and IL- 13, via repression of transcriptional regulators GATA3 and NFATC2. Protects Th1 cells from amplifying aberrant type-I IFN response in an IFN-gamma abundant microenvironment by acting as a repressor of type-I IFN transcription factors and type-I IFN-stimulated genes. Acts as a regulator of antiviral B-cell responses; controls chronic viral infection by promoting the antiviral antibody IgG2a isotype switching and via regulation of a broad antiviral gene expression program. Required for the correct development of natural killer (NK) and mucosal-associated invariant T (MAIT) cells. The sequence is that of T-box transcription factor TBX21 (TBX21) from Homo sapiens (Human).